A 674-amino-acid polypeptide reads, in one-letter code: DNA ligase (674 aa).

NAD(+) is bound by residues 34-38, 83-84, and glutamate 114; these read DSEYD and SL. Lysine 116 acts as the N6-AMP-lysine intermediate in catalysis. Residues arginine 137, glutamate 174, lysine 290, and lysine 314 each contribute to the NAD(+) site. Cysteine 405, cysteine 408, cysteine 424, and cysteine 429 together coordinate Zn(2+). One can recognise a BRCT domain in the interval 587–674; the sequence is QSGTQFDGKM…KLSLIENTKF (88 aa).

The protein belongs to the NAD-dependent DNA ligase family. LigA subfamily. Mg(2+) is required as a cofactor. Requires Mn(2+) as cofactor.

The enzyme catalyses NAD(+) + (deoxyribonucleotide)n-3'-hydroxyl + 5'-phospho-(deoxyribonucleotide)m = (deoxyribonucleotide)n+m + AMP + beta-nicotinamide D-nucleotide.. Functionally, DNA ligase that catalyzes the formation of phosphodiester linkages between 5'-phosphoryl and 3'-hydroxyl groups in double-stranded DNA using NAD as a coenzyme and as the energy source for the reaction. It is essential for DNA replication and repair of damaged DNA. The chain is DNA ligase from Endomicrobium trichonymphae.